Reading from the N-terminus, the 232-residue chain is tRNA (guanine-N(1)-)-methyltransferase (232 aa).

S-adenosyl-L-methionine is bound by residues G108 and 128–133 (IGDFIM).

This sequence belongs to the RNA methyltransferase TrmD family. As to quaternary structure, homodimer.

It is found in the cytoplasm. The enzyme catalyses guanosine(37) in tRNA + S-adenosyl-L-methionine = N(1)-methylguanosine(37) in tRNA + S-adenosyl-L-homocysteine + H(+). In terms of biological role, specifically methylates guanosine-37 in various tRNAs. This Campylobacter fetus subsp. fetus (strain 82-40) protein is tRNA (guanine-N(1)-)-methyltransferase.